The primary structure comprises 693 residues: A disintegrin and metalloproteinase with thrombospondin motifs like (693 aa).

Positions 1-24 (MESSVATHWLSAFVILCSFITTQS) are cleaved as a signal peptide. Residues 67-80 (IPTSHPANSNSADS) show a composition bias toward polar residues. Positions 67–91 (IPTSHPANSNSADSGKTPHLKTEKV) are disordered. N124 and N194 each carry an N-linked (GlcNAc...) asparagine glycan. Residues 353 to 585 (IYPEILVIVD…DTATCLYNSP (233 aa)) form the Peptidase M12B domain. Disulfide bonds link C485/C580 and C541/C564. H514 contributes to the Zn(2+) binding site. Residues 514-525 (HEVGHLLGAVHD) carry the Metal-binding motif. E515 is an active-site residue. Residues H518 and H524 each coordinate Zn(2+). N687 is a glycosylation site (N-linked (GlcNAc...) asparagine).

Zn(2+) is required as a cofactor.

The protein resides in the secreted. The protein localises to the extracellular space. It localises to the extracellular matrix. Its function is as follows. Involved in larval molting and metamorphosis. May degrade extracellular matrix (ECM) and basement membrane (BM) during the development of organs to allow degeneration and remodeling of tissues. The protein is A disintegrin and metalloproteinase with thrombospondin motifs like of Bombyx mori (Silk moth).